Consider the following 468-residue polypeptide: ATP synthase subunit beta (468 aa).

ATP is bound at residue 153–160 (GGAGVGKT).

The protein belongs to the ATPase alpha/beta chains family. In terms of assembly, F-type ATPases have 2 components, CF(1) - the catalytic core - and CF(0) - the membrane proton channel. CF(1) has five subunits: alpha(3), beta(3), gamma(1), delta(1), epsilon(1). CF(0) has three main subunits: a(1), b(2) and c(9-12). The alpha and beta chains form an alternating ring which encloses part of the gamma chain. CF(1) is attached to CF(0) by a central stalk formed by the gamma and epsilon chains, while a peripheral stalk is formed by the delta and b chains.

The protein resides in the cell membrane. The catalysed reaction is ATP + H2O + 4 H(+)(in) = ADP + phosphate + 5 H(+)(out). Produces ATP from ADP in the presence of a proton gradient across the membrane. The catalytic sites are hosted primarily by the beta subunits. This is ATP synthase subunit beta from Ligilactobacillus salivarius (strain UCC118) (Lactobacillus salivarius).